The following is a 115-amino-acid chain: Photosystem II reaction center Psb28 protein (115 aa).

It belongs to the Psb28 family. As to quaternary structure, part of the photosystem II complex.

It localises to the plastid. The protein localises to the chloroplast thylakoid membrane. The chain is Photosystem II reaction center Psb28 protein from Cyanidium caldarium (Red alga).